The chain runs to 206 residues: MTKRTSAKYKIDRRMGENIWGRPKSPVNRREYGPGQHGQRRKGKLSDFGLQLRAKQKLKGYYGDLTEKQFRRIYAEAERLRGDTGEFLIGLLERRLDAVVYRAKFVPTVFAARQFVNHGHVTVNGQKVNIPSYRVKEGDVIAVRDKSKQLAVVLEAVGLAERDVPDYVDADHSKMTATFVRTPGLSDVPYPVVMEPNLVVEFYAKN.

The interval 18-44 is disordered; the sequence is NIWGRPKSPVNRREYGPGQHGQRRKGK. The region spanning 94–157 is the S4 RNA-binding domain; it reads RRLDAVVYRA…KQLAVVLEAV (64 aa).

Belongs to the universal ribosomal protein uS4 family. Part of the 30S ribosomal subunit. Contacts protein S5. The interaction surface between S4 and S5 is involved in control of translational fidelity.

In terms of biological role, one of the primary rRNA binding proteins, it binds directly to 16S rRNA where it nucleates assembly of the body of the 30S subunit. Functionally, with S5 and S12 plays an important role in translational accuracy. The sequence is that of Small ribosomal subunit protein uS4 from Jannaschia sp. (strain CCS1).